The chain runs to 124 residues: Small ribosomal subunit protein uS12 (124 aa).

The disordered stretch occupies residues 1–28; it reads MPTIQQLIRTERQSSKAKTKSPALKSCP. Asp-89 carries the post-translational modification 3-methylthioaspartic acid. Residues 104-124 are disordered; sequence TAGVKDRRQSRSKYGAKTPKE.

The protein belongs to the universal ribosomal protein uS12 family. Part of the 30S ribosomal subunit. Contacts proteins S8 and S17. May interact with IF1 in the 30S initiation complex.

With S4 and S5 plays an important role in translational accuracy. In terms of biological role, interacts with and stabilizes bases of the 16S rRNA that are involved in tRNA selection in the A site and with the mRNA backbone. Located at the interface of the 30S and 50S subunits, it traverses the body of the 30S subunit contacting proteins on the other side and probably holding the rRNA structure together. The combined cluster of proteins S8, S12 and S17 appears to hold together the shoulder and platform of the 30S subunit. The polypeptide is Small ribosomal subunit protein uS12 (Synechococcus sp. (strain WH7803)).